Reading from the N-terminus, the 154-residue chain is Ribonuclease H (154 aa).

Residues 5 to 146 (EQNIVYLYCD…ADELANRGID (142 aa)) form the RNase H type-1 domain. Residues D14, E52, D74, and D138 each coordinate Mg(2+).

It belongs to the RNase H family. Monomer. The cofactor is Mg(2+).

Its subcellular location is the cytoplasm. The enzyme catalyses Endonucleolytic cleavage to 5'-phosphomonoester.. Functionally, endonuclease that specifically degrades the RNA of RNA-DNA hybrids. This chain is Ribonuclease H, found in Coxiella burnetii (strain RSA 331 / Henzerling II).